The sequence spans 297 residues: 4-hydroxy-tetrahydrodipicolinate synthase (297 aa).

Thr51 contributes to the pyruvate binding site. Catalysis depends on Tyr139, which acts as the Proton donor/acceptor. Lys167 serves as the catalytic Schiff-base intermediate with substrate. Val209 provides a ligand contact to pyruvate.

This sequence belongs to the DapA family. In terms of assembly, homotetramer; dimer of dimers.

It localises to the cytoplasm. The catalysed reaction is L-aspartate 4-semialdehyde + pyruvate = (2S,4S)-4-hydroxy-2,3,4,5-tetrahydrodipicolinate + H2O + H(+). Its pathway is amino-acid biosynthesis; L-lysine biosynthesis via DAP pathway; (S)-tetrahydrodipicolinate from L-aspartate: step 3/4. Its function is as follows. Catalyzes the condensation of (S)-aspartate-beta-semialdehyde [(S)-ASA] and pyruvate to 4-hydroxy-tetrahydrodipicolinate (HTPA). The polypeptide is 4-hydroxy-tetrahydrodipicolinate synthase (Albidiferax ferrireducens (strain ATCC BAA-621 / DSM 15236 / T118) (Rhodoferax ferrireducens)).